Reading from the N-terminus, the 485-residue chain is Ras-like GTPase YcjX (485 aa).

The short motif at 33 to 40 is the Walker A motif element; that stretch reads GLSGAGKT. Positions 35, 36, 38, 39, 40, 41, 110, 113, 114, 115, 355, 357, and 358 each coordinate GTP. Residues Gly36, Gly38, Lys39, Thr40, Ala41, Trp110, Ser113, and Thr114 each contribute to the GDP site. Positions 355, 357, 358, 395, 396, and 397 each coordinate GDP. Ile397 contributes to the GTP binding site.

Monomer in solution. Mg(2+) is required as a cofactor.

It catalyses the reaction GTP + H2O = GDP + phosphate + H(+). Its activity is regulated as follows. Alternates between an inactive form bound to GDP and an active form bound to GTP. Likely activated by a guanine nucleotide-exchange factor (GEF). Functionally, binds GTP and GDP. Has intrinsic GTPase activity. Does not hydrolyze ATP. May act as a transducer of stress responses. The protein is Ras-like GTPase YcjX of Shewanella oneidensis (strain ATCC 700550 / JCM 31522 / CIP 106686 / LMG 19005 / NCIMB 14063 / MR-1).